A 115-amino-acid polypeptide reads, in one-letter code: Large ribosomal subunit protein bL19 (115 aa).

This sequence belongs to the bacterial ribosomal protein bL19 family.

Its function is as follows. This protein is located at the 30S-50S ribosomal subunit interface and may play a role in the structure and function of the aminoacyl-tRNA binding site. This chain is Large ribosomal subunit protein bL19, found in Koribacter versatilis (strain Ellin345).